We begin with the raw amino-acid sequence, 309 residues long: Epidermal retinol dehydrogenase 2 (309 aa).

Residues 11–31 (LLVFLGKSLLSVLEALLFHVI) traverse the membrane as a helical segment. An NADP(+)-binding site is contributed by 44–68 (LITGAGSGLGRLLALQFARLGAVLV). A substrate-binding site is contributed by S177. Y190 (proton acceptor) is an active-site residue. The chain crosses the membrane as a helical span at residues 270 to 290 (FLYFIVFLKSILPIKTGILIA).

It belongs to the short-chain dehydrogenases/reductases (SDR) family.

It is found in the endoplasmic reticulum membrane. The enzyme catalyses all-trans-retinol--[retinol-binding protein] + NAD(+) = all-trans-retinal--[retinol-binding protein] + NADH + H(+). The protein operates within cofactor metabolism; retinol metabolism. Oxidoreductase with strong preference for NAD. Active in both the oxidative and reductive directions. Oxidizes all-trans-retinol in all-trans-retinaldehyde. No activity was detected with 11-cis-retinol or 11-cis-retinaldehyde as substrates with either NAD(+)/NADH or NADP(+)/NADPH. The sequence is that of Epidermal retinol dehydrogenase 2 from Mus musculus (Mouse).